We begin with the raw amino-acid sequence, 309 residues long: Serine/threonine-protein phosphatase 2A catalytic subunit beta isoform (309 aa).

Asp-57, His-59, Asp-85, and Asn-117 together coordinate Mn(2+). His-118 acts as the Proton donor in catalysis. Residues His-167 and His-241 each contribute to the Mn(2+) site. Tyr-307 is subject to Phosphotyrosine. Leu-309 bears the Leucine methyl ester mark.

It belongs to the PPP phosphatase family. PP-1 subfamily. In terms of assembly, PP2A consists of a common heterodimeric core enzyme (composed of a 36 kDa catalytic subunit (subunit C) and a 65 kDa constant regulatory subunit (PR65) (subunit A)) that associates with a variety of regulatory subunits. Proteins that associate with the core dimer include three families of regulatory subunits B (the R2/B/PR55/B55, R3/B''/PR72/PR130/PR59 and R5/B'/B56 families), the 48 kDa variable regulatory subunit, viral proteins, and cell signaling molecules. Binds PPME1. May indirectly interact with SGO1, most probably through regulatory B56 subunits. Found in a complex with at least ARL2, PPP2CB, PPP2R1A, PPP2R2A, PPP2R5E and TBCD. Interacts with TBCD. Interacts with CTTNBP2NL. Interacts with PTPA. Part of the core of STRIPAK complexes composed of PP2A catalytic and scaffolding subunits, the striatins (PP2A regulatory subunits), the striatin-associated proteins MOB4, STRIP1 and STRIP2, PDCD10 and members of the STE20 kinases, such as STK24 and STK26. Mn(2+) serves as cofactor. Post-translationally, reversibly methyl esterified on Leu-309 by leucine carboxyl methyltransferase 1 (LCMT1) and protein phosphatase methylesterase 1 (PPME1). Carboxyl methylation influences the affinity of the catalytic subunit for the different regulatory subunits, thereby modulating the PP2A holoenzyme's substrate specificity, enzyme activity and cellular localization. In terms of processing, phosphorylation of either threonine (by autophosphorylation-activated protein kinase) or tyrosine results in inactivation of the phosphatase. Auto-dephosphorylation has been suggested as a mechanism for reactivation. May be monoubiquitinated by NOSIP.

It localises to the cytoplasm. It is found in the nucleus. Its subcellular location is the chromosome. The protein resides in the centromere. The protein localises to the cytoskeleton. It localises to the spindle pole. It carries out the reaction O-phospho-L-seryl-[protein] + H2O = L-seryl-[protein] + phosphate. The catalysed reaction is O-phospho-L-threonyl-[protein] + H2O = L-threonyl-[protein] + phosphate. Its function is as follows. Catalytic subunit of protein phosphatase 2A (PP2A), a serine/threonine phosphatase involved in the regulation of a wide variety of enzymes, signal transduction pathways, and cellular events. PP2A can modulate the activity of phosphorylase B kinase, casein kinase 2, mitogen-stimulated S6 kinase, and MAP-2 kinase. Part of the striatin-interacting phosphatase and kinase (STRIPAK) complexes. STRIPAK complexes have critical roles in protein (de)phosphorylation and are regulators of multiple signaling pathways including Hippo, MAPK, nuclear receptor and cytoskeleton remodeling. Different types of STRIPAK complexes are involved in a variety of biological processes such as cell growth, differentiation, apoptosis, metabolism and immune regulation. This chain is Serine/threonine-protein phosphatase 2A catalytic subunit beta isoform (PPP2CB), found in Bos taurus (Bovine).